The sequence spans 484 residues: HTH-type transcriptional regulator TauR (484 aa).

An HTH gntR-type domain is found at 16-84 (GSLQHRLRQM…GRSGTFVSAA (69 aa)). The H-T-H motif DNA-binding region spans 44 to 63 (TRALAAHLGVARITVTLAYA). N6-(pyridoxal phosphate)lysine is present on Lys-330.

This sequence in the C-terminal section; belongs to the class-I pyridoxal-phosphate-dependent aminotransferase family. Pyridoxal 5'-phosphate is required as a cofactor.

Transcriptional activator, which is essential for taurine-dependent expression of the tpa-tauR-xsc operon. Acts by binding to direct repeats in the promoter region. This Rhodobacter capsulatus (strain ATCC BAA-309 / NBRC 16581 / SB1003) protein is HTH-type transcriptional regulator TauR.